The chain runs to 135 residues: Germinal center-associated signaling and motility-like protein (135 aa).

A disordered region spans residues 1 to 68 (MGNYLLRKLS…ENGSGSEEVC (68 aa)). A compositionally biased stretch (basic and acidic residues) spans 22-48 (GNPDEERKRQEMTTFERKLQDQDKKSQ). Positions 26–50 (EERKRQEMTTFERKLQDQDKKSQEV) form a coiled coil. A compositionally biased stretch (low complexity) spans 51-66 (SSTSNQENENGSGSEE).

The protein is Germinal center-associated signaling and motility-like protein (GCSAML) of Homo sapiens (Human).